The following is a 102-amino-acid chain: Aspartyl/glutamyl-tRNA(Asn/Gln) amidotransferase subunit C (102 aa).

It belongs to the GatC family. Heterotrimer of A, B and C subunits.

The enzyme catalyses L-glutamyl-tRNA(Gln) + L-glutamine + ATP + H2O = L-glutaminyl-tRNA(Gln) + L-glutamate + ADP + phosphate + H(+). It catalyses the reaction L-aspartyl-tRNA(Asn) + L-glutamine + ATP + H2O = L-asparaginyl-tRNA(Asn) + L-glutamate + ADP + phosphate + 2 H(+). Functionally, allows the formation of correctly charged Asn-tRNA(Asn) or Gln-tRNA(Gln) through the transamidation of misacylated Asp-tRNA(Asn) or Glu-tRNA(Gln) in organisms which lack either or both of asparaginyl-tRNA or glutaminyl-tRNA synthetases. The reaction takes place in the presence of glutamine and ATP through an activated phospho-Asp-tRNA(Asn) or phospho-Glu-tRNA(Gln). This Bordetella bronchiseptica (strain ATCC BAA-588 / NCTC 13252 / RB50) (Alcaligenes bronchisepticus) protein is Aspartyl/glutamyl-tRNA(Asn/Gln) amidotransferase subunit C.